The following is a 96-amino-acid chain: UPF0235 protein ESA_00387 (96 aa).

The protein belongs to the UPF0235 family.

In Cronobacter sakazakii (strain ATCC BAA-894) (Enterobacter sakazakii), this protein is UPF0235 protein ESA_00387.